The primary structure comprises 222 residues: UPF0173 metal-dependent hydrolase Kcr_0055 (222 aa).

It belongs to the UPF0173 family.

This chain is UPF0173 metal-dependent hydrolase Kcr_0055, found in Korarchaeum cryptofilum (strain OPF8).